The sequence spans 109 residues: Putative double-stranded DNA mimic protein YciU (109 aa).

Belongs to the putative dsDNA mimic protein family.

In terms of biological role, may act as a double-stranded DNA (dsDNA) mimic. Probably regulates the activity of a dsDNA-binding protein. This is Putative double-stranded DNA mimic protein YciU from Escherichia coli O45:K1 (strain S88 / ExPEC).